Consider the following 206-residue polypeptide: Small ribosomal subunit protein uS4 (206 aa).

The region spanning 96 to 156 is the S4 RNA-binding domain; the sequence is CRLDNVVYRM…EKAKNQLRIV (61 aa).

It belongs to the universal ribosomal protein uS4 family. In terms of assembly, part of the 30S ribosomal subunit. Contacts protein S5. The interaction surface between S4 and S5 is involved in control of translational fidelity.

In terms of biological role, one of the primary rRNA binding proteins, it binds directly to 16S rRNA where it nucleates assembly of the body of the 30S subunit. Functionally, with S5 and S12 plays an important role in translational accuracy. In Pseudomonas fluorescens (strain ATCC BAA-477 / NRRL B-23932 / Pf-5), this protein is Small ribosomal subunit protein uS4.